Here is a 331-residue protein sequence, read N- to C-terminus: UPF0324 membrane protein SA0329 (331 aa).

The next 11 helical transmembrane spans lie at 9–26, 31–48, 69–88, 93–115, 122–144, 154–176, 183–202, 217–234, 247–269, 273–295, and 308–330; these read FMIG…SFLA, ILDK…AILY, LLRF…DIIG, LLAI…NKLL, ALLL…APIF, SIGI…YAIF, YGAW…LAGG, LGRV…ILIM, ISIP…VTIP, LNIL…GLNV, and LMTI…HWLY.

Belongs to the UPF0324 family.

It is found in the cell membrane. The polypeptide is UPF0324 membrane protein SA0329 (Staphylococcus aureus (strain N315)).